The primary structure comprises 222 residues: UPF0688 protein C1orf174 homolog (222 aa).

2 disordered regions span residues 23-57 (STSL…RTSK) and 98-158 (EDGA…EPVP). The segment covering 33-48 (ASSTSAKTTCLASSSH) has biased composition (polar residues). Residues 121-131 (VSEEPSVKAEE) are compositionally biased toward basic and acidic residues. Residue Ser-172 is modified to Phosphoserine.

The protein belongs to the UPF0688 family.

It localises to the nucleus. This Rattus norvegicus (Rat) protein is UPF0688 protein C1orf174 homolog.